The sequence spans 494 residues: MTTVRTRIAPSPTGDPHVGTAYIALFNLCFARQHGGQFILRIEDTDQLRSTRESEQQIYDALRWLGIEWDEGPDVGGPHGPYRQSERGHIYKKYSDELVEKGHAFTCFCTPERLDAVRAEQMARKETPRYDGHCMHLPKDEVQRRLAAGESHVTRMKVPTEGVCVVPDMLRGDVEIPWDRMDMQVLMKADGLPTYFLANVVDDHLMGITHVLRGEEWLPSAPKLIKLYEYFGWEQPQLCYMPLLRNPDKSKLSKRKNPTSITFYERMGYLPQALLNYLGRMGWSMPDEREKFTLAEMIEHFDLSRVSLGGPIFDLEKLSWLNGQWIREQSVEEFAREVQKWALNPEYLMKIAPHVQGRVENFSQIAPLAGFFFSGGVPLDASLFEHKKLDPTQVRQVLQLVLWKLESLRQWEKERITGCIQAVAEHLQLKLRDVMPLMFPAITGHASSVSVLDAMEILGADLSRYRLRQALELLGGASKKETKEWEKIRDAIPG.

Residues Pro10–Thr20 carry the 'HIGH' region motif. Zn(2+) contacts are provided by Cys107, Cys109, Cys134, and His136. Residues Lys251–Arg255 carry the 'KMSKS' region motif. Lys254 serves as a coordination point for ATP.

This sequence belongs to the class-I aminoacyl-tRNA synthetase family. Glutamate--tRNA ligase type 1 subfamily. In terms of assembly, monomer. Zn(2+) is required as a cofactor.

It localises to the cytoplasm. It carries out the reaction tRNA(Glu) + L-glutamate + ATP = L-glutamyl-tRNA(Glu) + AMP + diphosphate. Catalyzes the attachment of glutamate to tRNA(Glu) in a two-step reaction: glutamate is first activated by ATP to form Glu-AMP and then transferred to the acceptor end of tRNA(Glu). The polypeptide is Glutamate--tRNA ligase (Pseudomonas aeruginosa (strain ATCC 15692 / DSM 22644 / CIP 104116 / JCM 14847 / LMG 12228 / 1C / PRS 101 / PAO1)).